A 425-amino-acid chain; its full sequence is Serine--tRNA ligase 2 (425 aa).

230-232 (TAE) contributes to the L-serine binding site. 261–263 (REE) serves as a coordination point for ATP. Glu-284 provides a ligand contact to L-serine. 348-351 (EISS) contributes to the ATP binding site. Ser-383 provides a ligand contact to L-serine.

Belongs to the class-II aminoacyl-tRNA synthetase family. Type-1 seryl-tRNA synthetase subfamily. In terms of assembly, homodimer. The tRNA molecule binds across the dimer.

The protein resides in the cytoplasm. The catalysed reaction is tRNA(Ser) + L-serine + ATP = L-seryl-tRNA(Ser) + AMP + diphosphate + H(+). It catalyses the reaction tRNA(Sec) + L-serine + ATP = L-seryl-tRNA(Sec) + AMP + diphosphate + H(+). It participates in aminoacyl-tRNA biosynthesis; selenocysteinyl-tRNA(Sec) biosynthesis; L-seryl-tRNA(Sec) from L-serine and tRNA(Sec): step 1/1. Functionally, catalyzes the attachment of serine to tRNA(Ser). Is also able to aminoacylate tRNA(Sec) with serine, to form the misacylated tRNA L-seryl-tRNA(Sec), which will be further converted into selenocysteinyl-tRNA(Sec). In Lactiplantibacillus plantarum (strain ATCC BAA-793 / NCIMB 8826 / WCFS1) (Lactobacillus plantarum), this protein is Serine--tRNA ligase 2.